A 454-amino-acid chain; its full sequence is Phosphoglucosamine mutase (454 aa).

Catalysis depends on Ser104, which acts as the Phosphoserine intermediate. Mg(2+) contacts are provided by Ser104, Asp241, Asp243, and Asp245. The residue at position 104 (Ser104) is a Phosphoserine.

Belongs to the phosphohexose mutase family. The cofactor is Mg(2+). Activated by phosphorylation.

It catalyses the reaction alpha-D-glucosamine 1-phosphate = D-glucosamine 6-phosphate. Catalyzes the conversion of glucosamine-6-phosphate to glucosamine-1-phosphate. The polypeptide is Phosphoglucosamine mutase (Paenarthrobacter aurescens (strain TC1)).